A 265-amino-acid polypeptide reads, in one-letter code: H-2 class II histocompatibility antigen, A-D beta chain (265 aa).

A signal peptide spans 1–27; that stretch reads MALQIPSLLLSAAVVVLMVLSSPRTEG. A beta-1 region spans residues 28-122; that stretch reads GNSERHFVVQ…PETSTSLRRL (95 aa). Over 28–226 the chain is Extracellular; it reads GNSERHFVVQ…RAQSESARSK (199 aa). 2 disulfides stabilise this stretch: cysteine 42-cysteine 106 and cysteine 145-cysteine 201. N-linked (GlcNAc...) asparagine glycosylation occurs at asparagine 46. The segment at 123-216 is beta-2; sequence EQPNVAISLS…SLKSPITVEW (94 aa). Residues 125-213 form the Ig-like C1-type domain; it reads PNVAISLSRT…EHPSLKSPIT (89 aa). The connecting peptide stretch occupies residues 217 to 226; it reads RAQSESARSK. Residues 227–247 traverse the membrane as a helical segment; the sequence is MLSGIGGCVLGVIFLGLGLFI. Topologically, residues 248 to 265 are cytoplasmic; that stretch reads RHRSQKGPRGPPPAGLLQ.

This sequence belongs to the MHC class II family. Ubiquitinated in immature dendritic cells leading to down-regulation of MHC class II.

The protein localises to the membrane. The chain is H-2 class II histocompatibility antigen, A-D beta chain (H2-Ab1) from Mus musculus (Mouse).